A 295-amino-acid chain; its full sequence is Small ribosomal subunit protein uS2 (295 aa).

Residues 263-295 (KKFSKTKNIDEETNTEFEKALNDADENKNSDNA) are disordered. The span at 278-295 (EFEKALNDADENKNSDNA) shows a compositional bias: basic and acidic residues.

Belongs to the universal ribosomal protein uS2 family.

This chain is Small ribosomal subunit protein uS2, found in Rickettsia peacockii (strain Rustic).